Here is a 247-residue protein sequence, read N- to C-terminus: 6-phosphogluconolactonase (247 aa).

It belongs to the glucosamine/galactosamine-6-phosphate isomerase family. 6-phosphogluconolactonase subfamily.

It catalyses the reaction 6-phospho-D-glucono-1,5-lactone + H2O = 6-phospho-D-gluconate + H(+). It participates in carbohydrate degradation; pentose phosphate pathway; D-ribulose 5-phosphate from D-glucose 6-phosphate (oxidative stage): step 2/3. Its function is as follows. Hydrolysis of 6-phosphogluconolactone to 6-phosphogluconate. The sequence is that of 6-phosphogluconolactonase (pgl) from Mycobacterium bovis (strain ATCC BAA-935 / AF2122/97).